The following is a 440-amino-acid chain: Streptokinase A (440 aa).

The signal sequence occupies residues Met-1–Ala-26.

In terms of biological role, this protein is not a protease, but it activates plasminogen by complexing with it. As a potential virulence factor, it is thought to prevent the formation of effective fibrin barriers around the site of infection, thereby contributing to the invasiveness of the cells. The sequence is that of Streptokinase A (ska) from Streptococcus pyogenes serotype M1.